Reading from the N-terminus, the 770-residue chain is Protein argonaute (770 aa).

The tract at residues 1–151 is N-terminal domain; the sequence is MKAKVVINLV…VIHIIHQIQS (151 aa). In terms of domain architecture, PAZ spans 154–272; that stretch reads TLWELVNKDP…LLPQLVVPTY (119 aa). Residues 276–361 form an interdomain connector region; the sequence is QLESDVAKEI…SQLLLWTNYS (86 aa). The mid domain stretch occupies residues 362-544; sequence RKYPVILPYE…LSKLGVKYYV (183 aa). A Piwi domain is found at 473–756; that stretch reads GLAFIAARNK…FANAIRNEWK (284 aa). Catalysis depends on residues Asp558, Glu596, Asp628, and His745. Mn(2+) is bound at residue Asp558. Residues Asp628, His745, and Val770 each contribute to the Mn(2+) site.

It belongs to the argonaute family. Long pAgo subfamily. Monomer. Mn(2+) is required as a cofactor.

With respect to regulation, inhibited at greater than 500 mM NaCl. In terms of biological role, a DNA-guided ssDNA endonuclease that may play a role in defense against invading mobile genetic elements. Uses short 5'-phospho-ssDNA sequences as guides (gDNA) to bind complementary target strands, resulting in cleavage of the target DNA (tDNA). Endonucleolytically cleaves DNA in short dsDNA (the gDNA indicates where to cleave on the tDNA). Efficient guide-dependent target DNA cleavage requires a minimal gDNA length of 15 nucleotides (nt) and works up to at least 31 nt. Overexpression decreases plasmid transformation efficiency. Has no appreciable activity with gRNA or on target RNA. Also has guide-independent activity on plasmid DNA called 'chopping'. The cleavage site is 10 nucleotides (nt) downstream of the target residue base-paired with the 5'-end of the gDNA, cleavage is insensitive to adenine methylation. DNA cleavage produces 5'-phosphomonoesters (as it can be ligated by T4 DNA ligase). This is Protein argonaute from Pyrococcus furiosus (strain ATCC 43587 / DSM 3638 / JCM 8422 / Vc1).